A 91-amino-acid chain; its full sequence is UPF0250 protein NGK_1021 (91 aa).

The protein belongs to the UPF0250 family.

This is UPF0250 protein NGK_1021 from Neisseria gonorrhoeae (strain NCCP11945).